A 103-amino-acid chain; its full sequence is Small ribosomal subunit protein uS10 (103 aa).

The protein belongs to the universal ribosomal protein uS10 family. As to quaternary structure, part of the 30S ribosomal subunit.

Its function is as follows. Involved in the binding of tRNA to the ribosomes. This chain is Small ribosomal subunit protein uS10, found in Blochmanniella pennsylvanica (strain BPEN).